The primary structure comprises 627 residues: DNA mismatch repair protein MutL (627 aa).

A compositionally biased stretch (basic and acidic residues) spans 354-364; the sequence is DEKPPEKKVPE. The disordered stretch occupies residues 354–374; the sequence is DEKPPEKKVPEKSTAPSYSPM.

The protein belongs to the DNA mismatch repair MutL/HexB family.

Its function is as follows. This protein is involved in the repair of mismatches in DNA. It is required for dam-dependent methyl-directed DNA mismatch repair. May act as a 'molecular matchmaker', a protein that promotes the formation of a stable complex between two or more DNA-binding proteins in an ATP-dependent manner without itself being part of a final effector complex. Overexpression of mutSL partially suppresses the high spontaneous mutation frequency of a ytkD/mutM/mutY triple disruption which lacks the system required to prevent damage by oxidized guanine (8-oxo-dGTP). This suggests that MutSL also functions to repair mismatches due to oxidative stress in both growing and stationary phase cells. This Bacillus subtilis (strain 168) protein is DNA mismatch repair protein MutL.